Here is a 1347-residue protein sequence, read N- to C-terminus: Protein dispatched homolog 3 (1347 aa).

Topologically, residues 1-67 are cytoplasmic; sequence MDSEDDPLLQ…LGWAFTNPCC (67 aa). Residues 68 to 88 traverse the membrane as a helical segment; the sequence is AGLVLFLGCSIPMVLSAFMFL. Over 89–417 the chain is Lumenal; it reads YYPPLDIDIS…YEVRRTFNND (329 aa). The tract at residues 156–207 is disordered; that stretch reads GNHSRPASRAPRSAPRDTVATQTSAANSSERRRREAPSPEGQVTNQSRARRG. Asn157 is a glycosylation site (N-linked (GlcNAc...) asparagine). A compositionally biased stretch (low complexity) spans 159 to 168; that stretch reads SRPASRAPRS. Residues 412-570 form the SSD domain; sequence RTFNNDMLLA…LFTMPAALGL (159 aa). The chain crosses the membrane as a helical span at residues 418–438; it reads MLLAFISSSCIAALVYILTSC. A topological domain (cytoplasmic) is located at residue Ser439. Residues 440 to 460 form a helical membrane-spanning segment; the sequence is VFLSFFGIASIGLSCLVALFL. At 461–463 the chain is on the lumenal side; the sequence is YHV. The chain crosses the membrane as a helical span at residues 464-484; sequence VFGIQYLGILNGVAAFVIVGI. Residues 485 to 528 are Cytoplasmic-facing; sequence GVDDVFVFINTYRQATHLEDPQLRMIHTIQTAGKATFFTSLTTA. Residues 529 to 549 traverse the membrane as a helical segment; sequence AAYAANVFSQIPAVHDFGLFM. Position 550 (Ser550) is a topological domain, lumenal. Residues 551-571 traverse the membrane as a helical segment; it reads LIVTCCWLAVLFTMPAALGLW. Residues 572-684 lie on the Cytoplasmic side of the membrane; sequence SLYMAPLESS…WVLWAAVKSR (113 aa). Residues 685-705 traverse the membrane as a helical segment; sequence WVIVGLFASILILSLVFASRL. At 706-1137 the chain is on the lumenal side; it reads RPASRAPLLF…IFMEIIGVQS (432 aa). N-linked (GlcNAc...) asparagine glycosylation occurs at Asn976. Residues 1138-1158 traverse the membrane as a helical segment; the sequence is ALYGLVLSLLICVAAVAVFTT. A topological domain (cytoplasmic) is located at residue His1159. Residues 1160-1180 form a helical membrane-spanning segment; sequence VLLLLPVLLSILGIVCLVVTI. Over 1181-1246 the chain is Lumenal; it reads MYWSGWEMGA…TLEAVRHVGV (66 aa). Residues 1247–1267 form a helical membrane-spanning segment; the sequence is AIVSSALTTVIATVPLFFCII. Residues 1268-1281 are Cytoplasmic-facing; sequence APFAKFGKIVALNT. A helical transmembrane segment spans residues 1282–1302; that stretch reads GVSILYTLTVSTALLGIMAPG. Topologically, residues 1303–1310 are lumenal; that stretch reads SFTRTRTS. A helical transmembrane segment spans residues 1311–1331; the sequence is FLKALGAVLLAGALGLGACLV. Residues 1332-1347 are Cytoplasmic-facing; it reads LLRSGYKIPLPSGATL.

The protein belongs to the patched family. Expressed in brain, retina, testis and thymus.

It localises to the endoplasmic reticulum membrane. The protein localises to the nucleus membrane. The protein resides in the cytoplasmic vesicle membrane. Its function is as follows. Plays a role in neuronal proliferation and differentiation. Plays a role in the accumulation of cellular cholesterol. Involved in intracellular lipid droplet formation. May contribute to cholesterol homeostasis in neuronal cells. The protein is Protein dispatched homolog 3 of Mus musculus (Mouse).